We begin with the raw amino-acid sequence, 548 residues long: Chaperonin GroEL 2 (548 aa).

ATP is bound by residues 30–33 (TLGP), Lys-51, 87–91 (DGTTT), Gly-415, 479–481 (NAA), and Asp-495. The disordered stretch occupies residues 524 to 548 (APKDAPPTAPAGVPGAGAGGPGFDF). Positions 537 to 548 (PGAGAGGPGFDF) are enriched in gly residues.

This sequence belongs to the chaperonin (HSP60) family. As to quaternary structure, forms a cylinder of 14 subunits composed of two heptameric rings stacked back-to-back. Interacts with the co-chaperonin GroES.

It localises to the cytoplasm. It catalyses the reaction ATP + H2O + a folded polypeptide = ADP + phosphate + an unfolded polypeptide.. Functionally, together with its co-chaperonin GroES, plays an essential role in assisting protein folding. The GroEL-GroES system forms a nano-cage that allows encapsulation of the non-native substrate proteins and provides a physical environment optimized to promote and accelerate protein folding. The chain is Chaperonin GroEL 2 from Burkholderia pseudomallei (strain 668).